A 160-amino-acid chain; its full sequence is Epithelial membrane protein 1 (160 aa).

The helical transmembrane segment at 1–21 (MLVLLAGLFVVHIATAIMLFV) threads the bilayer. Asparagine 43 carries an N-linked (GlcNAc...) asparagine glycan. The next 3 helical transmembrane spans lie at 67–87 (FMIL…FQLF), 95–115 (FFLS…GVSI), and 137–157 (FILT…YMVL).

This sequence belongs to the PMP-22/EMP/MP20 family. Most prominently found in the gastrointestinal tract, skin, lung, and brain but not in liver.

The protein localises to the membrane. In Rattus norvegicus (Rat), this protein is Epithelial membrane protein 1 (Emp1).